The following is a 121-amino-acid chain: Ribosome-binding factor A (121 aa).

Belongs to the RbfA family. As to quaternary structure, monomer. Binds 30S ribosomal subunits, but not 50S ribosomal subunits or 70S ribosomes.

It localises to the cytoplasm. One of several proteins that assist in the late maturation steps of the functional core of the 30S ribosomal subunit. Associates with free 30S ribosomal subunits (but not with 30S subunits that are part of 70S ribosomes or polysomes). Required for efficient processing of 16S rRNA. May interact with the 5'-terminal helix region of 16S rRNA. In Lactobacillus helveticus (strain DPC 4571), this protein is Ribosome-binding factor A.